The chain runs to 287 residues: Probable endonuclease 4 (287 aa).

Zn(2+) contacts are provided by His-69, His-109, Glu-144, Asp-178, His-181, His-215, Asp-228, His-230, and Glu-260.

The protein belongs to the AP endonuclease 2 family. The cofactor is Zn(2+).

It catalyses the reaction Endonucleolytic cleavage to 5'-phosphooligonucleotide end-products.. In terms of biological role, endonuclease IV plays a role in DNA repair. It cleaves phosphodiester bonds at apurinic or apyrimidinic (AP) sites, generating a 3'-hydroxyl group and a 5'-terminal sugar phosphate. The polypeptide is Probable endonuclease 4 (Thermotoga petrophila (strain ATCC BAA-488 / DSM 13995 / JCM 10881 / RKU-1)).